A 277-amino-acid chain; its full sequence is Caspase-6 (277 aa).

Positions 1–5 (MTETD) are excised as a propeptide. Residues 25 to 27 (KRR) are tri-arginine exosite. Residue Ser-62 is modified to Phosphoserine. The active site involves His-104. The 130's region stretch occupies residues 108–125 (NHIYAYDAKIEIQTLTGL). Residue Cys-146 is part of the active site. Residues 163–176 (HQTDKLDDNVTQVD) constitute a propeptide that is removed on maturation. At Ser-240 the chain carries Phosphoserine. 2 S-palmitoyl cysteine lipidation sites follow: Cys-247 and Cys-260.

It belongs to the peptidase C14A family. As to quaternary structure, heterotetramer that consists of two anti-parallel arranged heterodimers, each one formed by a 18 kDa (p18) and a 11 kDa (p11) subunits. Interacts with BIRC6/bruce. Interacts with RIPK3. Heterotetramer that consists of two anti-parallel arranged heterodimers, each one formed by a 18 kDa (Caspase-6 subunit p18) and a 11 kDa (Caspase-6 subunit p11) subunit. In terms of processing, phosphorylated by NUAK1; phosphorylation inhibits self-activation. Phosphorylation at Ser-240 by AMP-activated protein kinase (PRKAA1 or PRKAA2) inhibits autocleavage, preventing caspase activation, thereby preventing hepatocyte apoptosis. Post-translationally, palmitoylation by ZDHHC17 blocks dimerization and subsequent activation, leading to inhibit the cysteine protease activity. Can be cleaved and activated by different caspases, depending on the context. Cleaved and activated by caspase-8 (CASP8) and subsequently by caspase-3 (CASP3). Can also undergo autoactivation by mediating autocleavage at Asp-162 and Asp-176, while it is not able to cleave its N-terminal disordered prodomain. Cleaved and activated by CASP1, possibly in the context of inflammation.

The protein localises to the cytoplasm. It localises to the nucleus. It catalyses the reaction Strict requirement for Asp at position P1 and has a preferred cleavage sequence of Val-Glu-His-Asp-|-.. With respect to regulation, during activation, the N-terminal disordered prodomain is removed by cleavage. Concomitantly, double cleavage gives rise to a large 18-kDa and a small 11-kDa subunit. The two large and two small subunits then assemble to form the active CASP6 complex. Can be cleaved and activated by different caspases, depending on the context. Cleaved and activated by caspase-8 (CASP8) and subsequently by caspase-3 (CASP3). Can also undergo autoactivation by mediating autocleavage at Asp-162 and Asp-176, while it is not able to cleave its N-terminal disordered prodomain. Intramolecular cleavage at Asp-176 is a prerequisite for CASP6 self-activation. Cleaved and activated by CASP1 in neurons, possibly in the context of inflammation. Phosphorylation at Ser-240 inhibits autocleavage, preventing caspase activation. In terms of biological role, cysteine protease that plays essential roles in programmed cell death, axonal degeneration, development and innate immunity. Acts as a non-canonical executioner caspase during apoptosis: localizes in the nucleus and cleaves the nuclear structural protein NUMA1 and lamin A/LMNA thereby inducing nuclear shrinkage and fragmentation. Lamin-A/LMNA cleavage is required for chromatin condensation and nuclear disassembly during apoptotic execution. Acts as a regulator of liver damage by promoting hepatocyte apoptosis: in absence of phosphorylation by AMP-activated protein kinase (AMPK), catalyzes cleavage of BID, leading to cytochrome c release, thereby participating in nonalcoholic steatohepatitis. Cleaves PARK7/DJ-1 in cells undergoing apoptosis. Involved in intrinsic apoptosis by mediating cleavage of RIPK1. Furthermore, cleaves many transcription factors such as NF-kappa-B and cAMP response element-binding protein/CREBBP. Cleaves phospholipid scramblase proteins XKR4 and XKR9. In addition to apoptosis, involved in different forms of programmed cell death. Plays an essential role in defense against viruses by acting as a central mediator of the ZBP1-mediated pyroptosis, apoptosis, and necroptosis (PANoptosis), independently of its cysteine protease activity. PANoptosis is a unique inflammatory programmed cell death, which provides a molecular scaffold that allows the interactions and activation of machinery required for inflammasome/pyroptosis, apoptosis and necroptosis. Mechanistically, interacts with RIPK3 and enhances the interaction between RIPK3 and ZBP1, leading to ZBP1-mediated inflammasome activation and cell death. Plays an essential role in axon degeneration during axon pruning which is the remodeling of axons during neurogenesis but not apoptosis. Regulates B-cell programs both during early development and after antigen stimulation. In Rattus norvegicus (Rat), this protein is Caspase-6.